Reading from the N-terminus, the 397-residue chain is Acetate kinase (397 aa).

Asn-7 contributes to the Mg(2+) binding site. An ATP-binding site is contributed by Lys-14. Position 90 (Arg-90) interacts with substrate. The active-site Proton donor/acceptor is the Asp-147. Residues 207-211 (HLGNG), 282-284 (DFR), and 330-334 (GLGEN) contribute to the ATP site. Glu-383 contacts Mg(2+).

This sequence belongs to the acetokinase family. Homodimer. Mg(2+) serves as cofactor. The cofactor is Mn(2+).

It is found in the cytoplasm. It catalyses the reaction acetate + ATP = acetyl phosphate + ADP. It participates in metabolic intermediate biosynthesis; acetyl-CoA biosynthesis; acetyl-CoA from acetate: step 1/2. Its function is as follows. Catalyzes the formation of acetyl phosphate from acetate and ATP. Can also catalyze the reverse reaction. The protein is Acetate kinase of Clostridium botulinum (strain Okra / Type B1).